A 160-amino-acid polypeptide reads, in one-letter code: uncharacterized protein (160 aa).

The Zn(2+) site is built by Cys26, Cys28, Cys50, and His61. The segment at 26 to 69 (CWCGEEIITFTSKTKENPYRRFYRCAIAMKRENEEHLFKWVDEA) adopts a GRF-type; atypical zinc-finger fold.

This is an uncharacterized protein from Arabidopsis thaliana (Mouse-ear cress).